We begin with the raw amino-acid sequence, 240 residues long: Large ribosomal subunit protein uL2 (240 aa).

The span at 1-12 (MGRRIQGQRRGR) shows a compositional bias: basic residues. Disordered regions lie at residues 1-21 (MGRR…RAPS) and 198-240 (VDHP…GSNK). Residues 221-231 (PPGRKVGDIAS) are compositionally biased toward basic and acidic residues.

This sequence belongs to the universal ribosomal protein uL2 family. Part of the 50S ribosomal subunit. Forms a bridge to the 30S subunit in the 70S ribosome.

One of the primary rRNA binding proteins. Required for association of the 30S and 50S subunits to form the 70S ribosome, for tRNA binding and peptide bond formation. It has been suggested to have peptidyltransferase activity; this is somewhat controversial. Makes several contacts with the 16S rRNA in the 70S ribosome. The polypeptide is Large ribosomal subunit protein uL2 (Halorubrum lacusprofundi (strain ATCC 49239 / DSM 5036 / JCM 8891 / ACAM 34)).